The sequence spans 632 residues: Palmitoyltransferase ZDHHC17 (632 aa).

Residues 1-304 (MQREEGFNTK…LKADKEFRQK (304 aa)) lie on the Cytoplasmic side of the membrane. The interval 11–305 (MADGPDEYET…KADKEFRQKV (295 aa)) is necessary and sufficient for interaction with DNAJC5 and SNAP25. 7 ANK repeats span residues 51-86 (THID…VRQP), 89-118 (ENVT…IVDQ), 123-152 (LNST…DPSL), 156-185 (EGCS…DVDM), 189-219 (NGMT…SVNL), 224-253 (HKNT…NVDA), and 257-286 (KGES…AKGY). 2 helical membrane passes run 305–325 (VMLG…DLDI) and 326–346 (DSWL…QFLS). Residues 347–357 (KSFFDHSMHSA) are Cytoplasmic-facing. The helical transmembrane segment at 358-378 (LPLGIYLATKFWMYVTWFFWF) threads the bilayer. The Lumenal segment spans residues 379–381 (WND). A helical transmembrane segment spans residues 382–402 (LNFLFIHLPFLANSVALFYNF). At 403–480 (GKSWKSDPGI…GNCVGAGNHR (78 aa)) the chain is on the cytoplasmic side. Residues 437–487 (IFCSTCLIRKPVRSKHCGVCNRCIAKFDHHCPWVGNCVGAGNHRYFMGYLF) form the DHHC domain. Residue Cys467 is the S-palmitoyl cysteine intermediate of the active site. A helical transmembrane segment spans residues 481 to 501 (YFMGYLFFLLFMICWMIYGCV). At 502-529 (SYWGLHCETTYTKDGFWTYITQIATCSP) the chain is on the lumenal side. Residues 530–550 (WMFWMFLNSVFHFLWVAVLLM) form a helical membrane-spanning segment. Topologically, residues 551-632 (CQLYQITCLG…QISGSGYQLV (82 aa)) are cytoplasmic.

Belongs to the DHHC palmitoyltransferase family. AKR/ZDHHC17 subfamily. Interacts (via ANK repeats) with numerous proteins (via the consensus sequence motif [VIAP]-[VIT]-x-x-Q-P). Interacts (via ANK repeats) with CLIP3. Interacts (via ANK repeats) with HTT. Interacts (via ANK repeats) with DNAJC5 (via C-terminus). Interacts (via ANK repeats) with MAP6. Interacts (via ANK repeats) with SNAP23. Interacts (via ANK repeats) with SNAP25. Interacts (via ANK repeats) with EVL. Interacts with SPRED1 and SPRED3. Interacts with GPM6A and OPTN. May interact (via ANK repeats) with SPRED2. May interact with NTRK1; may regulate its localization and function. In terms of processing, autopalmitoylated. Autopalmitoylation has a regulatory role in ZDHHC17-mediated Mg(2+) transport. As to expression, expressed in liver, testis, kidney, heart, pancreas and brain. Highest expression was seen in the brain. Localized predominantly in the perinuclear regions of neurons from the cortex, striatum and hippocampus. Colocalized with HTT in the medium spiny neurons of the striatum and the spiny neurons that project into the globus pallidus.

Its subcellular location is the golgi apparatus membrane. It is found in the cytoplasmic vesicle membrane. It localises to the presynaptic cell membrane. The enzyme catalyses L-cysteinyl-[protein] + hexadecanoyl-CoA = S-hexadecanoyl-L-cysteinyl-[protein] + CoA. It carries out the reaction L-cysteinyl-[protein] + tetradecanoyl-CoA = S-tetradecanoyl-L-cysteinyl-[protein] + CoA. It catalyses the reaction L-cysteinyl-[protein] + octadecanoyl-CoA = S-octadecanoyl-L-cysteinyl-[protein] + CoA. Its function is as follows. Palmitoyltransferase that catalyzes the addition of palmitate onto various protein substrates and is involved in a variety of cellular processes. Has no stringent fatty acid selectivity and in addition to palmitate can also transfer onto target proteins myristate from tetradecanoyl-CoA and stearate from octadecanoyl-CoA. Palmitoyltransferase specific for a subset of neuronal proteins, including SNAP25, DLG4/PSD95, GAD2, SYT1 and HTT. Also palmitoylates neuronal protein GPM6A as well as SPRED1 and SPRED3. Could also play a role in axonogenesis through the regulation of NTRK1 and the downstream ERK1/ERK2 signaling cascade. May be involved in the sorting or targeting of critical proteins involved in the initiating events of endocytosis at the plasma membrane. May play a role in Mg(2+) transport. Could also palmitoylate DNAJC5 and regulate its localization to the Golgi membrane. Palmitoylates CASP6, thereby preventing its dimerization and subsequent activation. This is Palmitoyltransferase ZDHHC17 from Mus musculus (Mouse).